Here is a 184-residue protein sequence, read N- to C-terminus: MSIMPDHWIRQMATGHGMIEPFVETQKRDGVISYGLSSYGYDARVADEFKIFTNVDSAVVDPKAFSPASFVDRKGPVCIIPPNSFALAHTVEYFRIPRNVLVICLGKSTYARCGIIVNVTPLEPEWEGQVTIEISNTTPLPARIYAGEGICQFLFLRGDSDCETSYADKAGKYMGQRGVSLPRM.

A dCTP-binding site is contributed by 107 to 112 (KSTYAR). Glutamate 133 functions as the Proton donor/acceptor in the catalytic mechanism. DCTP-binding residues include glutamine 152, tyrosine 166, and glutamine 176.

The protein belongs to the dCTP deaminase family. As to quaternary structure, homotrimer.

The catalysed reaction is dCTP + H2O + H(+) = dUTP + NH4(+). The protein operates within pyrimidine metabolism; dUMP biosynthesis; dUMP from dCTP (dUTP route): step 1/2. Its function is as follows. Catalyzes the deamination of dCTP to dUTP. This Granulibacter bethesdensis (strain ATCC BAA-1260 / CGDNIH1) protein is dCTP deaminase.